The sequence spans 331 residues: 2-isopropylmalate synthase (331 aa).

A Pyruvate carboxyltransferase domain is found at 1 to 80 (RDEVVRGRDV…YTRINTREIY (80 aa)). Residues His-15, His-17, and Asn-51 each coordinate Mn(2+). The segment at 205 to 331 (QLEHVQFFSG…PSIEEVHRGV (127 aa)) is regulatory domain.

This sequence belongs to the alpha-IPM synthase/homocitrate synthase family. LeuA type 1 subfamily. As to quaternary structure, homotetramer. Requires Mn(2+) as cofactor.

Its subcellular location is the cytoplasm. The enzyme catalyses 3-methyl-2-oxobutanoate + acetyl-CoA + H2O = (2S)-2-isopropylmalate + CoA + H(+). Its pathway is amino-acid biosynthesis; L-leucine biosynthesis; L-leucine from 3-methyl-2-oxobutanoate: step 1/4. Its function is as follows. Catalyzes the condensation of the acetyl group of acetyl-CoA with 3-methyl-2-oxobutanoate (2-oxoisovalerate) to form 3-carboxy-3-hydroxy-4-methylpentanoate (2-isopropylmalate). The sequence is that of 2-isopropylmalate synthase from Thermus thermophilus.